The following is a 175-amino-acid chain: NADH dehydrogenase [ubiquinone] iron-sulfur protein 4, mitochondrial (175 aa).

Residues 1–42 (MAAVSISVSLRQAMLGRRAMATAAVSVCRVPSRLLSTSTWKL) constitute a mitochondrion transit peptide. Position 173 is a phosphoserine (Ser173).

This sequence belongs to the complex I NDUFS4 subunit family. In terms of assembly, this is a component of the iron-sulfur (IP) fragment of the enzyme. Interacts with BCAP31 and TOMM40; the interaction mediates its translocation to the mitochondria; the interaction with BCAP31 is direct.

The protein resides in the mitochondrion inner membrane. In terms of biological role, accessory subunit of the mitochondrial membrane respiratory chain NADH dehydrogenase (Complex I), that is believed not to be involved in catalysis. Complex I functions in the transfer of electrons from NADH to the respiratory chain. The immediate electron acceptor for the enzyme is believed to be ubiquinone. This is NADH dehydrogenase [ubiquinone] iron-sulfur protein 4, mitochondrial (Ndufs4) from Mus musculus (Mouse).